A 154-amino-acid chain; its full sequence is Hemiasterlin resistant protein 1 (154 aa).

2 disordered regions span residues 1-64 (MVRR…PGLM) and 86-109 (GMFTGGGSSHAEQAPAAAAAPAGA). Low complexity-rich tracts occupy residues 7–28 (ASPSPSAPVRSAPRPAAQSSFA), 48–57 (TPMGAPMGAP), and 96–109 (AEQAPAAAAAPAGA). The region spanning 116–154 (SQPCEFEWRQFVDCAQNQSDVSLCNGFNDIFKQCKARYA) is the CHCH domain. Short sequence motifs (cx9C motif) lie at residues 119 to 129 (CEFEWRQFVDC) and 139 to 149 (CNGFNDIFKQC). Disulfide bonds link cysteine 119/cysteine 149 and cysteine 129/cysteine 139.

This is Hemiasterlin resistant protein 1 (har-1) from Caenorhabditis elegans.